A 159-amino-acid chain; its full sequence is NADH-quinone oxidoreductase subunit B (159 aa).

Residues Cys-37, Cys-38, Cys-102, and Cys-132 each coordinate [4Fe-4S] cluster.

Belongs to the complex I 20 kDa subunit family. NDH-1 is composed of 14 different subunits. Subunits NuoB, C, D, E, F, and G constitute the peripheral sector of the complex. [4Fe-4S] cluster is required as a cofactor.

Its subcellular location is the cell inner membrane. The catalysed reaction is a quinone + NADH + 5 H(+)(in) = a quinol + NAD(+) + 4 H(+)(out). Functionally, NDH-1 shuttles electrons from NADH, via FMN and iron-sulfur (Fe-S) centers, to quinones in the respiratory chain. The immediate electron acceptor for the enzyme in this species is believed to be ubiquinone. Couples the redox reaction to proton translocation (for every two electrons transferred, four hydrogen ions are translocated across the cytoplasmic membrane), and thus conserves the redox energy in a proton gradient. This chain is NADH-quinone oxidoreductase subunit B, found in Variovorax paradoxus (strain S110).